The chain runs to 78 residues: Serine--glyoxylate aminotransferase (78 aa).

Belongs to the class-V pyridoxal-phosphate-dependent aminotransferase family. In terms of assembly, homodimer. Pyridoxal 5'-phosphate serves as cofactor. As to expression, expressed in leaves but not in root tissue or seedlings.

It localises to the peroxisome. The catalysed reaction is glyoxylate + L-serine = 3-hydroxypyruvate + glycine. It catalyses the reaction glyoxylate + L-alanine = glycine + pyruvate. With respect to regulation, inhibited by aminooxyacetate. This Triticum aestivum (Wheat) protein is Serine--glyoxylate aminotransferase.